Here is a 389-residue protein sequence, read N- to C-terminus: NAD-dependent protein deacetylase sirtuin-2 (389 aa).

The tract at residues Met-1–Gly-34 is disordered. Ala-2 bears the N-acetylalanine mark. Residues Ser-23 and Ser-25 each carry the phosphoserine modification. Thr-27 carries the phosphothreonine modification. Positions Leu-41–Leu-51 match the Nuclear export signal motif. A Phosphoserine modification is found at Ser-53. Residues Arg-57–Lys-338 enclose the Deacetylase sirtuin-type domain. Residues Ala-85 to Thr-89 and Asp-95 to Arg-97 each bind NAD(+). Phosphoserine is present on Ser-100. Residue Gln-167–Asp-170 participates in NAD(+) binding. The active-site Proton acceptor is the His-187. 4 residues coordinate Zn(2+): Cys-195, Cys-200, Cys-221, and Cys-224. Residues Thr-262–Ser-263, Asn-286–Glu-288, and Cys-324 each bind NAD(+). The interval Ala-350–Gln-389 is disordered. The span at Asp-353–Pro-369 shows a compositional bias: polar residues. Ser-368 and Ser-372 each carry phosphoserine. Basic and acidic residues predominate over residues Glu-378–Gln-389.

This sequence belongs to the sirtuin family. Class I subfamily. As to quaternary structure, interacts with CDC20, FOXO3 and FZR1. Associates with microtubule in primary cortical mature neurons. Homotrimer. Interacts (via both phosphorylated, unphosphorylated, active or inactive forms) with HDAC6; the interaction is necessary for the complex to interact with alpha-tubulin, suggesting that these proteins belong to a large complex that deacetylates the cytoskeleton. Interacts with FOXO1; the interaction is disrupted upon serum-starvation or oxidative stress, leading to increased level of acetylated FOXO1 and induction of autophagy. Interacts with RELA; the interaction occurs in the cytoplasm and is increased in a TNF-alpha-dependent manner. Interacts with HOXA10; the interaction is direct. Interacts with YWHAB and YWHAG; the interactions occur in a AKT-dependent manner and increase SIRT2-dependent TP53 deacetylation. Interacts with MAPK1/ERK2 and MAPK3/ERK1; the interactions increase SIRT2 stability and deacetylation activity. Interacts (phosphorylated form) with KMT5A isoform 2; the interaction is direct, stimulates KMT5A-mediated methyltransferase activity on histone at 'Lys-20' (H4K20me1) and is increased in a H(2)O(2)-induced oxidative stress-dependent manner. Interacts with G6PD; the interaction is enhanced by H(2)O(2) treatment. Interacts with a G1/S-specific cyclin E-CDK2 complex. Interacts with AURKA, CDK5R1 (p35 form) and CDK5 and HIF1A. Interacts with the tRNA ligase SARS1; recruited to the VEGFA promoter via interaction with SARS1. Isoform 2 and isoform 4 associate with microtubules in primary cortical mature neurons. Interacts with BEX4; negatively regulates alpha-tubulin deacetylation by SIRT2. It depends on Zn(2+) as a cofactor. Post-translationally, phosphorylated at phosphoserine and phosphothreonine. Phosphorylated at Ser-368 by a mitotic kinase CDK1/cyclin B at the G2/M transition; phosphorylation regulates the delay in cell-cycle progression. Phosphorylated at Ser-368 by a mitotic kinase G1/S-specific cyclin E/Cdk2 complex; phosphorylation inactivates SIRT2-mediated alpha-tubulin deacetylation and thereby negatively regulates cell adhesion, cell migration and neurite outgrowth during neuronal differentiation. Phosphorylated by cyclin A/Cdk2 and p35-Cdk5 complexes and to a lesser extent by the cyclin D3/Cdk4 and cyclin B/Cdk1, in vitro. Dephosphorylated at Ser-368 by CDC14A and CDC14B around early anaphase. Acetylated by EP300; acetylation leads both to the decreased of SIRT2-mediated alpha-tubulin deacetylase activity and SIRT2-mediated down-regulation of TP53 transcriptional activity. In terms of processing, ubiquitinated. As to expression, isoform 1 is weakly expressed in the cortex at postnatal(P) days P1, P3 and P7, and increases progressively between P17 and older adult cortex. Isoform 1 is also expressed in heart, liver and skeletal muscle, weakly expressed in the striatum and spinal cord. Isoform 2 is not expressed in the cortex at P1, P3 and P7, and increases strongly and progressively between P17 and older adult cortex. Isoform 2 is also expressed in the heart, liver, striatum and spinal cord. Isoform 4 is weakly expressed in older adult cortex and spinal cords. Expressed in the cortex. Expressed in postnatal sciatic nerves during myelination and during remyelination after nerve injury. Expressed in neurons, oligodendrocytes, Schwann cells, Purkinje cells and in astrocytes of white matter. Strongly expressed in preadipocytes compared with differentiated adipocytes. Expressed in cerebellar granule cells. Expressed in the inner ear: in the cochlea, expressed in types I and V fibrocytes in the spiral ligament (SL) and slightly in stria vascularis (SV); in the organ of Corti, expressed in some supporting cells; in the crista ampullaris, expressed in spiral ganglion cells; also expressed in the endolymphatic sac (ES) epithelial cells (at protein level). Expressed in the brain, spinal cord, optic nerve and hippocampus. Strongly expressed in 6-8 week-old ovulated meiosis II oocytes and weakly expressed in 45-58 week-old ovulated meiosis II oocytes. Expressed in the cochlea, vestibule and acoustic nerve of the inner ear.

It is found in the nucleus. It localises to the cytoplasm. Its subcellular location is the perinuclear region. The protein resides in the perikaryon. The protein localises to the cytoskeleton. It is found in the cell projection. It localises to the growth cone. Its subcellular location is the myelin membrane. The protein resides in the microtubule organizing center. The protein localises to the centrosome. It is found in the spindle. It localises to the chromosome. Its subcellular location is the midbody. The protein resides in the centriole. The enzyme catalyses N(6)-acetyl-L-lysyl-[protein] + NAD(+) + H2O = 2''-O-acetyl-ADP-D-ribose + nicotinamide + L-lysyl-[protein]. It catalyses the reaction N(6)-tetradecanoyl-L-lysyl-[protein] + NAD(+) + H2O = 2''-O-tetradecanoyl-ADP-D-ribose + nicotinamide + L-lysyl-[protein]. It carries out the reaction N(6)-hexadecanoyl-L-lysyl-[protein] + NAD(+) + H2O = 2''-O-hexadecanoyl-ADP-D-ribose + nicotinamide + L-lysyl-[protein]. With respect to regulation, inhibited by Sirtinol, A3 and M15 small molecules. Inhibited by nicotinamide. Inhibited by a macrocyclic peptide inhibitor S2iL5. Inhibited by EP300-induced acetylation. Its function is as follows. NAD-dependent protein deacetylase, which deacetylates internal lysines on histone and alpha-tubulin as well as many other proteins such as key transcription factors. Participates in the modulation of multiple and diverse biological processes such as cell cycle control, genomic integrity, microtubule dynamics, cell differentiation, metabolic networks, and autophagy. Plays a major role in the control of cell cycle progression and genomic stability. Functions in the antephase checkpoint preventing precocious mitotic entry in response to microtubule stress agents, and hence allowing proper inheritance of chromosomes. Positively regulates the anaphase promoting complex/cyclosome (APC/C) ubiquitin ligase complex activity by deacetylating CDC20 and FZR1, then allowing progression through mitosis. Associates both with chromatin at transcriptional start sites (TSSs) and enhancers of active genes. Plays a role in cell cycle and chromatin compaction through epigenetic modulation of the regulation of histone H4 'Lys-20' methylation (H4K20me1) during early mitosis. Specifically deacetylates histone H4 at 'Lys-16' (H4K16ac) between the G2/M transition and metaphase enabling H4K20me1 deposition by KMT5A leading to ulterior levels of H4K20me2 and H4K20me3 deposition throughout cell cycle, and mitotic S-phase progression. Deacetylates KMT5A modulating KMT5A chromatin localization during the mitotic stress response. Also deacetylates histone H3 at 'Lys-57' (H3K56ac) during the mitotic G2/M transition. During oocyte meiosis progression, may deacetylate histone H4 at 'Lys-16' (H4K16ac) and alpha-tubulin, regulating spindle assembly and chromosome alignment by influencing microtubule dynamics and kinetochore function. Deacetylates histone H4 at 'Lys-16' (H4K16ac) at the VEGFA promoter and thereby contributes to regulate expression of VEGFA, a key regulator of angiogenesis. Deacetylates alpha-tubulin at 'Lys-40' and hence controls neuronal motility, oligodendroglial cell arbor projection processes and proliferation of non-neuronal cells. Phosphorylation at Ser-368 by a G1/S-specific cyclin E-CDK2 complex inactivates SIRT2-mediated alpha-tubulin deacetylation, negatively regulating cell adhesion, cell migration and neurite outgrowth during neuronal differentiation. Deacetylates PARD3 and participates in the regulation of Schwann cell peripheral myelination formation during early postnatal development and during postinjury remyelination. Involved in several cellular metabolic pathways. Plays a role in the regulation of blood glucose homeostasis by deacetylating and stabilizing phosphoenolpyruvate carboxykinase PCK1 activity in response to low nutrient availability. Acts as a key regulator in the pentose phosphate pathway (PPP) by deacetylating and activating the glucose-6-phosphate G6PD enzyme, and therefore, stimulates the production of cytosolic NADPH to counteract oxidative damage. Maintains energy homeostasis in response to nutrient deprivation as well as energy expenditure by inhibiting adipogenesis and promoting lipolysis. Attenuates adipocyte differentiation by deacetylating and promoting FOXO1 interaction to PPARG and subsequent repression of PPARG-dependent transcriptional activity. Plays a role in the regulation of lysosome-mediated degradation of protein aggregates by autophagy in neuronal cells. Deacetylates FOXO1 in response to oxidative stress or serum deprivation, thereby negatively regulating FOXO1-mediated autophagy. Deacetylates a broad range of transcription factors and co-regulators regulating target gene expression. Deacetylates transcriptional factor FOXO3 stimulating the ubiquitin ligase SCF(SKP2)-mediated FOXO3 ubiquitination and degradation. Deacetylates HIF1A and therefore promotes HIF1A degradation and inhibition of HIF1A transcriptional activity in tumor cells in response to hypoxia. Deacetylates RELA in the cytoplasm inhibiting NF-kappaB-dependent transcription activation upon TNF-alpha stimulation. Inhibits transcriptional activation by deacetylating p53/TP53 and EP300. Also deacetylates EIF5A. Functions as a negative regulator on oxidative stress-tolerance in response to anoxia-reoxygenation conditions. Plays a role as tumor suppressor. In addition to protein deacetylase activity, also has activity toward long-chain fatty acyl groups and mediates protein-lysine demyristoylation and depalmitoylation of target proteins, such as ARF6 and KRAS, thereby regulating their association with membranes. In terms of biological role, deacetylates alpha-tubulin. The protein is NAD-dependent protein deacetylase sirtuin-2 (Sirt2) of Mus musculus (Mouse).